We begin with the raw amino-acid sequence, 437 residues long: Trigger factor (437 aa).

Residues 161 to 246 (DDQVNIDFVG…VNSVSAPVLP (86 aa)) enclose the PPIase FKBP-type domain.

The protein belongs to the FKBP-type PPIase family. Tig subfamily.

The protein resides in the cytoplasm. The enzyme catalyses [protein]-peptidylproline (omega=180) = [protein]-peptidylproline (omega=0). Functionally, involved in protein export. Acts as a chaperone by maintaining the newly synthesized protein in an open conformation. Functions as a peptidyl-prolyl cis-trans isomerase. The protein is Trigger factor of Pseudomonas putida (strain ATCC 47054 / DSM 6125 / CFBP 8728 / NCIMB 11950 / KT2440).